The following is a 188-amino-acid chain: Probable nicotinate-nucleotide adenylyltransferase (188 aa).

It belongs to the NadD family.

It catalyses the reaction nicotinate beta-D-ribonucleotide + ATP + H(+) = deamido-NAD(+) + diphosphate. It functions in the pathway cofactor biosynthesis; NAD(+) biosynthesis; deamido-NAD(+) from nicotinate D-ribonucleotide: step 1/1. Its function is as follows. Catalyzes the reversible adenylation of nicotinate mononucleotide (NaMN) to nicotinic acid adenine dinucleotide (NaAD). This is Probable nicotinate-nucleotide adenylyltransferase from Salinispora arenicola (strain CNS-205).